A 306-amino-acid chain; its full sequence is Mitochondrial basic amino acids transporter (306 aa).

6 helical membrane-spanning segments follow: residues 2–22, 61–81, 96–116, 153–172, 187–207, and 255–275; these read ALDFLAGCAGGVAGVIVGHPF, GLGSPLMGLTFINALVFGVQG, FLAGAAAGAIQCVICCPMELA, GMVSTLLRETPSFGVYFLTY, LLVPKLLLAGGTSGITSWLST, and LLRAFPVNAATFATVTVVLTY. 3 Solcar repeats span residues 2 to 86, 90 to 178, and 190 to 275; these read ALDF…TLRA, DSPL…LTRA, and PKLL…VLTY. The interval 283-306 is disordered; that stretch reads VDSEAAPGASTTPAGPALAQPSSL. The segment covering 287–306 has biased composition (low complexity); the sequence is AAPGASTTPAGPALAQPSSL.

Belongs to the mitochondrial carrier (TC 2.A.29) family.

It is found in the mitochondrion inner membrane. The enzyme catalyses L-lysine(out) + L-arginine(in) = L-lysine(in) + L-arginine(out). It carries out the reaction L-histidine(out) + L-arginine(in) = L-histidine(in) + L-arginine(out). It catalyses the reaction L-ornithine(in) + L-arginine(out) = L-ornithine(out) + L-arginine(in). The catalysed reaction is L-homoarginine(in) + L-arginine(out) = L-homoarginine(out) + L-arginine(in). The enzyme catalyses N(omega)-methyl-L-arginine(in) + L-arginine(out) = N(omega)-methyl-L-arginine(out) + L-arginine(in). It carries out the reaction L-arginine(in) = L-arginine(out). It catalyses the reaction L-lysine(in) = L-lysine(out). The catalysed reaction is L-ornithine(in) = L-ornithine(out). The enzyme catalyses L-histidine(out) = L-histidine(in). Its function is as follows. Mitochondrial transporter of arginine, lysine, homoarginine, methylarginine and, to a much lesser extent, ornithine and histidine. Does not transport carnitine nor acylcarnitines. Functions by both counter-exchange and uniport mechanisms. Plays a physiological role in the import of basic amino acids into mitochondria for mitochondrial protein synthesis and amino acid degradation. This chain is Mitochondrial basic amino acids transporter (Slc25a29), found in Rattus norvegicus (Rat).